A 337-amino-acid polypeptide reads, in one-letter code: MHSRKSKSITGKRKQVGSNVTRVIKPQKTRRIIRRFHHLINKRQSICKFLCLKENLDDSNEEKNDKIIRLSIKGNVRLGKYYEDGKSQSFNDAMESQLLRLHSLIKNESKSKDTSDLAVMYTLLGYIMNQINKLGGLETYQIASQNGQLKERGGDTSKLLEKWIRSSFENCPGAVALEIGSLSSGNRISRCALFRNVVRIDLEEHEGVIKQDFMERPLPRNENDKFDLISCSLVLNFVKNHRDRGAMCHRMVKFLKPQGYIFIVLPQACVTHSRYCDKTLLQNLLGSIGLIMLNSHQSNKLYYCLYQLQVVPPQPSSFSKRIKVNDGPGLNNFGITL.

2 residues coordinate S-adenosyl-L-methionine: G180 and D201.

The protein belongs to the BMT2 family.

It is found in the nucleus. It localises to the nucleolus. The enzyme catalyses adenosine(2142) in 25S rRNA + S-adenosyl-L-methionine = N(1)-methyladenosine(2142) in 25S rRNA + S-adenosyl-L-homocysteine + H(+). In terms of biological role, S-adenosyl-L-methionine-dependent methyltransferase that specifically methylates the N(1) position of adenine 2142 in 25S rRNA. N(1)-methyladenine(2142) in 25S rRNA is present in helix 65, a region that accounts for most of the intersubunit surface of the large subunit. The polypeptide is 25S rRNA (adenine(2142)-N(1))-methyltransferase (Saccharomyces cerevisiae (strain ATCC 204508 / S288c) (Baker's yeast)).